The chain runs to 1070 residues: MLRDGNEGMSTIPGFNQIQFEGFWRFIDQGLTEELSKFPKMEDTDQEIEFQLFVETYQLAEPLIKEKDAVYESLTYSSELYVSAGLIWKTRREMQEQTILIGNIPLMNSLGTFIVNGIYRIVINQILQSPGIYYRSELDHNGISVYTGTIISDWGGRSELEIDRKARIWARVSRKQKISILVLSSAMGSNLREILDNVCYPEIFLSFLNDKEKKKIGSKENAILEFYQQFACVGGDPVFSESLCKDLQKKFFQQRCELGRIGRRNMNRRLNLDIPENNTFLLPRDILAAADHLIGMKFGMGTLDDMNHLKHKRIRSVADLLQDQFGLALVRLENVVRGTISGAIRHKLIPTPQNLVTSTPLTTTFESFFGLHPLSQVLDRTNPLTQIVHGRKLSYLGPGGLTGRTASFRIRDIHPSHYGRICPIDTSEGINVGLIGSLAIHARIGPWGSLESPYYEISERSKRVQMLYLSPSRDEYYMLASGNSLALNQGIQEEQVVPARYRQEFLTIAWEQVHFRSIFSFQYFSIGASLIPFIEHNDANRALMSSNMQRQAVPLSQSEKCIVGTGLERQVALDSGVLAIAEHEGKIIYTNTDKIVLLGNGNTVSIPLVMYQRSNKNTCMHQKPQIPRGKCVKKGQILADGAATVGGELALGKNVLVAYMPWEGYNFEDAVLISERLVYEDIYTSFHIRKYEIQTYVTSQGPEKVTSEIPHLEAHLLRNLDKNGIVRLGSWVETGDILVGKLTPQMAKESSYAPEDRLLRAILGIQVSTSKETCLKLPIGGRGRVIDVRWIQKKGGSSYNPETIHVYISQKREIKVGDKVAGRHGNKGIISRILLRQDMPYLQDGRPVDMIFNPLGVPSRMNVGQIFECSLGLAGSLLDRHYRIAPFDERYEQEASRKLVFSELYEASKQTANPWVFEPEYPGKSRIFDGRTGDPFEQPVIIGNPYILKLIHQVDDKIHGRSSGHYALVTQQPLRGRAKQGGQRVGEMEVWALEGFGVAHILQEMLTYKSDHIKARQEVLGTTIIGGTIPNPEDAPESFRLLVRELRSLALELNHFLVSERNFQINRMEA.

Belongs to the RNA polymerase beta chain family. In terms of assembly, in plastids the minimal PEP RNA polymerase catalytic core is composed of four subunits: alpha, beta, beta', and beta''. When a (nuclear-encoded) sigma factor is associated with the core the holoenzyme is formed, which can initiate transcription.

It localises to the plastid. The protein localises to the chloroplast. The catalysed reaction is RNA(n) + a ribonucleoside 5'-triphosphate = RNA(n+1) + diphosphate. In terms of biological role, DNA-dependent RNA polymerase catalyzes the transcription of DNA into RNA using the four ribonucleoside triphosphates as substrates. The sequence is that of DNA-directed RNA polymerase subunit beta from Spinacia oleracea (Spinach).